Consider the following 149-residue polypeptide: UPF0178 protein HEAR0259 (149 aa).

The protein belongs to the UPF0178 family.

The polypeptide is UPF0178 protein HEAR0259 (Herminiimonas arsenicoxydans).